The primary structure comprises 61 residues: MPELQERIRNFLKESKRVFLVTRKPGWEEYKKAAKITGLGIILIGLIGMLIRIMGILVLGG.

Residues 39-59 (LGIILIGLIGMLIRIMGILVL) traverse the membrane as a helical segment.

Belongs to the SecE/SEC61-gamma family. As to quaternary structure, component of the Sec protein translocase complex. Heterotrimer consisting of SecY (alpha), SecG (beta) and SecE (gamma) subunits. The heterotrimers can form oligomers, although 1 heterotrimer is thought to be able to translocate proteins. Interacts with the ribosome. May interact with SecDF, and other proteins may be involved.

The protein resides in the cell membrane. Functionally, essential subunit of the Sec protein translocation channel SecYEG. Clamps together the 2 halves of SecY. May contact the channel plug during translocation. The chain is Protein translocase subunit SecE from Pyrococcus abyssi (strain GE5 / Orsay).